A 63-amino-acid chain; its full sequence is UPF0337 protein Atu0782 (63 aa).

A disordered region spans residues 1-63 (MGSTSDKIAG…DAVKGAVDRM (63 aa)). Over residues 51 to 63 (KAKDAVKGAVDRM) the composition is skewed to basic and acidic residues.

It belongs to the UPF0337 (CsbD) family.

The polypeptide is UPF0337 protein Atu0782 (Agrobacterium fabrum (strain C58 / ATCC 33970) (Agrobacterium tumefaciens (strain C58))).